The sequence spans 259 residues: Keratinocyte-associated transmembrane protein 2 (259 aa).

An N-terminal signal peptide occupies residues 1–44 (MAASALGRMCGAAREKLSPGPGARGLGALARSLVLALLLVPVLC). Residues 45-190 (SDRSENPPNN…VKLPPPNRED (146 aa)) lie on the Extracellular side of the membrane. A disordered region spans residues 47–155 (RSENPPNNAT…YDWTTNPRDE (109 aa)). Positions 50–81 (NPPNNATVSSPVVVTAPGNHTSPSVSQISTTL) are enriched in polar residues. Residues N54 and N68 are each glycosylated (N-linked (GlcNAc...) asparagine). Residues 82–104 (SPASAEKSGSSSAAPTPTAAPSA) are compositionally biased toward low complexity. Acidic residues predominate over residues 105–122 (PEEEADSNEDPSMEEEDL). Position 165 is a phosphoserine (S165). The helical transmembrane segment at 191–211 (SHFFFHLLIFAFCAAVVYVTY) threads the bilayer. Topologically, residues 212–259 (HNKRKIFLLVQSRKWRDGLCSKTVEYHRLDQNVNEAMPSLKITNDYIF) are cytoplasmic. S223 and S250 each carry phosphoserine.

It localises to the membrane. The sequence is that of Keratinocyte-associated transmembrane protein 2 (Kct2) from Mus musculus (Mouse).